Consider the following 145-residue polypeptide: UPF0260 protein VS_0923 (145 aa).

This sequence belongs to the UPF0260 family.

The sequence is that of UPF0260 protein VS_0923 from Vibrio atlanticus (strain LGP32) (Vibrio splendidus (strain Mel32)).